Here is a 146-residue protein sequence, read N- to C-terminus: MMSGDYLVIDKRVLPDVYEKVLFAKKLLKDGKVKEITEAVKIAGISRSVYYKYRDFVFDFAETSEGRKVTYNIIFKNEKGLLSNISNYITEKGGDILTINQGIPLNGYANLSITIDLSTVDGDIKTLTEGLLNIRNVEKVEFIGME.

An ACT domain is found at 70–145 (TYNIIFKNEK…NVEKVEFIGM (76 aa)).

It belongs to the UPF0735 family.

The protein is UPF0735 ACT domain-containing protein Cbei_1295 of Clostridium beijerinckii (strain ATCC 51743 / NCIMB 8052) (Clostridium acetobutylicum).